The primary structure comprises 274 residues: Large ribosomal subunit protein uL2 (274 aa).

The segment at 224–256 (VMNPVDHPHGGGEGKTGEGRHPVDPWGNLTKGY) is disordered. The segment covering 229-246 (DHPHGGGEGKTGEGRHPV) has biased composition (basic and acidic residues).

Belongs to the universal ribosomal protein uL2 family. Part of the 50S ribosomal subunit. Forms a bridge to the 30S subunit in the 70S ribosome.

Its function is as follows. One of the primary rRNA binding proteins. Required for association of the 30S and 50S subunits to form the 70S ribosome, for tRNA binding and peptide bond formation. It has been suggested to have peptidyltransferase activity; this is somewhat controversial. Makes several contacts with the 16S rRNA in the 70S ribosome. The protein is Large ribosomal subunit protein uL2 of Polaromonas sp. (strain JS666 / ATCC BAA-500).